The sequence spans 101 residues: Urease subunit beta (101 aa).

Belongs to the urease beta subunit family. Heterotrimer of UreA (gamma), UreB (beta) and UreC (alpha) subunits. Three heterotrimers associate to form the active enzyme.

It localises to the cytoplasm. The enzyme catalyses urea + 2 H2O + H(+) = hydrogencarbonate + 2 NH4(+). Its pathway is nitrogen metabolism; urea degradation; CO(2) and NH(3) from urea (urease route): step 1/1. The sequence is that of Urease subunit beta from Variovorax paradoxus (strain S110).